A 257-amino-acid chain; its full sequence is 1-(5-phosphoribosyl)-5-[(5-phosphoribosylamino)methylideneamino] imidazole-4-carboxamide isomerase (257 aa).

Catalysis depends on Asp8, which acts as the Proton acceptor. Asp129 acts as the Proton donor in catalysis.

This sequence belongs to the HisA/HisF family.

The protein resides in the cytoplasm. The catalysed reaction is 1-(5-phospho-beta-D-ribosyl)-5-[(5-phospho-beta-D-ribosylamino)methylideneamino]imidazole-4-carboxamide = 5-[(5-phospho-1-deoxy-D-ribulos-1-ylimino)methylamino]-1-(5-phospho-beta-D-ribosyl)imidazole-4-carboxamide. It functions in the pathway amino-acid biosynthesis; L-histidine biosynthesis; L-histidine from 5-phospho-alpha-D-ribose 1-diphosphate: step 4/9. In Nostoc punctiforme (strain ATCC 29133 / PCC 73102), this protein is 1-(5-phosphoribosyl)-5-[(5-phosphoribosylamino)methylideneamino] imidazole-4-carboxamide isomerase.